The chain runs to 317 residues: Retinol dehydrogenase 16 (317 aa).

Residue phenylalanine 33 to leucine 57 participates in NAD(+) binding. Serine 164 contacts substrate. Tyrosine 176 (proton acceptor) is an active-site residue. A helical transmembrane segment spans residues phenylalanine 289–tryptophan 308.

The protein belongs to the short-chain dehydrogenases/reductases (SDR) family. In terms of assembly, homodimer. Post-translationally, not N-glycosylated. As to expression, liver &gt; kidney &gt; brain &gt; lung &gt; testis.

It localises to the microsome membrane. The protein localises to the endoplasmic reticulum membrane. It catalyses the reaction all-trans-retinol--[retinol-binding protein] + NAD(+) = all-trans-retinal--[retinol-binding protein] + NADH + H(+). The enzyme catalyses all-trans-retinol + NAD(+) = all-trans-retinal + NADH + H(+). The catalysed reaction is 13-cis-retinol + NAD(+) = 13-cis-retinal + NADH + H(+). It carries out the reaction 11-cis-retinol + NAD(+) = 11-cis-retinal + NADH + H(+). It catalyses the reaction 9-cis-retinol + NAD(+) = 9-cis-retinal + NADH + H(+). The enzyme catalyses 5alpha-androstane-3alpha,17beta-diol + NAD(+) = 17beta-hydroxy-5alpha-androstan-3-one + NADH + H(+). The catalysed reaction is androsterone + NAD(+) = 5alpha-androstan-3,17-dione + NADH + H(+). The protein operates within cofactor metabolism; retinol metabolism. Oxidoreductase with a preference for NAD. Oxidizes all-trans-retinol, 9-cis-retinol, 11-cis-retinol and 13-cis-retinol to the corresponding aldehydes. Has higher activity towards CRBP-bound retinol than with free retinol. Oxidizes 3-alpha-hydroxysteroids. Oxidizes androstanediol and androsterone to dihydrotestosterone and androstanedione. Can also catalyze the reverse reaction. This is Retinol dehydrogenase 16 from Rattus norvegicus (Rat).